A 324-amino-acid chain; its full sequence is NADH-quinone oxidoreductase subunit H (324 aa).

8 helical membrane-spanning segments follow: residues 11–31, 81–101, 114–134, 154–174, 186–206, 237–257, 265–285, and 304–324; these read ILITVGKAVVILLVVVTCGAF, VIFTLAPMIAFTSMLIAFAIV, IGILFFLMMAGLAVYAVLFAG, VSYEVFIGLSLMGVVAQAGSF, LWNVIPQFFGFITFAIAGVAV, FFVGEYIGIVTVSALMVTLFF, LPPFVWFALKTGFFMMMFILI, and VCLPITLLNLLATAAVILYNA.

Belongs to the complex I subunit 1 family. As to quaternary structure, NDH-1 is composed of 13 different subunits. Subunits NuoA, H, J, K, L, M, N constitute the membrane sector of the complex.

Its subcellular location is the cell inner membrane. The enzyme catalyses a quinone + NADH + 5 H(+)(in) = a quinol + NAD(+) + 4 H(+)(out). Functionally, NDH-1 shuttles electrons from NADH, via FMN and iron-sulfur (Fe-S) centers, to quinones in the respiratory chain. The immediate electron acceptor for the enzyme in this species is believed to be ubiquinone. Couples the redox reaction to proton translocation (for every two electrons transferred, four hydrogen ions are translocated across the cytoplasmic membrane), and thus conserves the redox energy in a proton gradient. This subunit may bind ubiquinone. This is NADH-quinone oxidoreductase subunit H from Pectobacterium atrosepticum (strain SCRI 1043 / ATCC BAA-672) (Erwinia carotovora subsp. atroseptica).